A 697-amino-acid polypeptide reads, in one-letter code: PHD finger protein At2g01810 (697 aa).

Disordered stretches follow at residues 319-362 and 457-478; these read DENS…QYYS and EQKR…TSTT. The span at 339–349 shows a compositional bias: basic and acidic residues; the sequence is SGRDTVLDDHN. A PHD-type zinc finger spans residues 635–685; sequence TVDCKCGARDDDGERMVACDACKVWHHTLCNSIEDDEAVPSVFLCNMCYGD.

It localises to the nucleus. The protein is PHD finger protein At2g01810 of Arabidopsis thaliana (Mouse-ear cress).